Here is a 377-residue protein sequence, read N- to C-terminus: Probable staphylococcal-like nuclease CAN3 (377 aa).

Residue Gly2 is the site of N-myristoyl glycine attachment. Cys7 carries S-palmitoyl cysteine lipidation. The tract at residues 15–57 (GDHYPYYKPTSRPHYQPPHYHGQPAAPPAPPQQQPLGPHGVTP) is disordered. The span at 27–38 (PHYQPPHYHGQP) shows a compositional bias: low complexity. One can recognise a TNase-like domain in the interval 177–353 (NTLPVYDKCI…KAANRGLWAS (177 aa)). Residue Asp190 coordinates Ca(2+). Residue Arg260 is part of the active site. Asp265 contacts Ca(2+). Catalysis depends on residues Glu268 and Arg302.

Belongs to the thermonuclease family. Ca(2+) serves as cofactor.

The protein resides in the cell membrane. Its function is as follows. Enzyme that catalyzes the hydrolysis of both DNA and RNA at the 5' position of the phosphodiester bond. The protein is Probable staphylococcal-like nuclease CAN3 of Oryza sativa subsp. japonica (Rice).